A 609-amino-acid polypeptide reads, in one-letter code: UvrABC system protein C (609 aa).

The region spanning 16-94 (SSAGVYRMYD…IKQYMPRYNV (79 aa)) is the GIY-YIG domain. The UVR domain occupies 203-238 (QQVIATLVGKMEQAAMDLNYEDAARYRDQISALRRV).

Belongs to the UvrC family. Interacts with UvrB in an incision complex.

It is found in the cytoplasm. In terms of biological role, the UvrABC repair system catalyzes the recognition and processing of DNA lesions. UvrC both incises the 5' and 3' sides of the lesion. The N-terminal half is responsible for the 3' incision and the C-terminal half is responsible for the 5' incision. The protein is UvrABC system protein C of Shewanella loihica (strain ATCC BAA-1088 / PV-4).